A 148-amino-acid polypeptide reads, in one-letter code: Large ribosomal subunit protein uL15 (148 aa).

Positions 1-30 (MPSRLRKTRKLRGHVSHGHGRIGKHRKHPG) are enriched in basic residues. Residues 1–39 (MPSRLRKTRKLRGHVSHGHGRIGKHRKHPGGRGNAGGLH) form a disordered region. Residue H39 is modified to (3S)-3-hydroxyhistidine. N6-acetyllysine is present on residues K47 and K55. Residue S68 is modified to Phosphoserine. Residue K110 is modified to N6-acetyllysine.

It belongs to the universal ribosomal protein uL15 family. In terms of assembly, component of the large ribosomal subunit. Hydroxylated on His-39 by MINA.

The protein localises to the cytoplasm. Component of the large ribosomal subunit. The ribosome is a large ribonucleoprotein complex responsible for the synthesis of proteins in the cell. This chain is Large ribosomal subunit protein uL15 (RPL27A), found in Macaca fascicularis (Crab-eating macaque).